The chain runs to 3987 residues: Hybrid PKS-NRPS synthetase buaA (3987 aa).

The Ketosynthase family 3 (KS3) domain maps to 5–438 (NEPIAIVGSG…GANAHAIVES (434 aa)). Catalysis depends on for beta-ketoacyl synthase activity residues Cys-176, His-315, and His-358. Residues 546–872 (VFTGQGAQWP…RNADDVESFS (327 aa)) form a malonyl-CoA:ACP transacylase (MAT) domain region. Positions 939–1072 (HELLGVRVDS…GAVRLQLGAA (134 aa)) are N-terminal hotdog fold. The 302-residue stretch at 939 to 1240 (HELLGVRVDS…VAPLVPVTQS (302 aa)) folds into the PKS/mFAS DH domain. The tract at residues 940–1238 (ELLGVRVDSL…LQVAPLVPVT (299 aa)) is dehydratase (DH) domain. The active-site Proton acceptor; for dehydratase activity is His-970. The C-terminal hotdog fold stretch occupies residues 1087 to 1240 (MNDVNIEHFY…VAPLVPVTQS (154 aa)). Residue Asp-1147 is the Proton donor; for dehydratase activity of the active site. The segment at 1399–1583 (YLANLVKQLS…TSTPSHDVFM (185 aa)) is methyltransferase (MT) domain. Residues 2113–2285 (TYLLVGLTGE…LPGSVMNLAG (173 aa)) form a ketoreductase (KR) domain region. The region spanning 2397 to 2473 (RVLTNGLILT…AMVEDTMERM (77 aa)) is the Carrier 1 domain. Ser-2433 carries the O-(pantetheine 4'-phosphoryl)serine modification. The interval 2489–2561 (AADRPSAPSD…PPPSSVMSED (73 aa)) is disordered. Positions 2514–2525 (HNSEEQESHAME) are enriched in basic and acidic residues. Positions 2532–2550 (STTSGGECSSTKESSSSEA) are enriched in low complexity. Positions 2582 to 3001 (MGYGSLQFFF…QLVKMCAYME (420 aa)) are condensation (C) domain. The segment at 3042-3448 (LDVAQARPEA…GQLYYEGRIA (407 aa)) is adenylation (A) (KR) domain. In terms of domain architecture, Carrier 2 spans 3564–3644 (ADLSETELAL…AMALKIRNSQ (81 aa)). O-(pantetheine 4'-phosphoryl)serine is present on Ser-3604. The tract at residues 3680 to 3916 (TVVLTGATGY…TGIAAAAVGA (237 aa)) is reductase (R) domain.

This sequence in the C-terminal section; belongs to the NRP synthetase family.

It functions in the pathway mycotoxin biosynthesis. Functionally, hybrid PKS-NRPS synthetase; part of the gene cluster that mediates the biosynthesis of burnettramic acids, an unusual class of bolaamphiphilic pyrrolizidinediones that display potent antibacterial, antifungal, and cytotoxic activities. The first step of the biosynthesis of burnettramic acids is the hydroxylation of proline by the proline hydroxylase buaE to generate 4-hydroxyproline. The PKS-NRPS buaA and trans-enoyl reductase buaC construct the highly reduced polyketide chain, and the condensation (C) domain of buaA then catalyzes the amide bond formation with the activated 4-hydroxyproline. This is followed by the R domain releasing the nascent polyketide-peptide directly via a Dieckmann condensation to afford a tetramic acid fused to the hydroxyproline, generating the bicyclic pyrrolidinedione moiety. The cytochrome P450 monooxygenases buaD and buaG are likely responsible for the multiple hydroxylations on the polyketide chain and its terminus, although in a heterologous context, buaD does not appear to be required. Therefore, while buaG may be a multifunctional cytochrome P450 monooxygenase, it cannot be ruled out that the two secondary alcohols on the polyketide chain could have an acetate origin. Finally, the glycosyltransferase buaB transfers beta-D-mannose to the aglycone burnettramic acid A to form burnettramic acid A. Burnettramic acid B is a minor cis-pyrrolizidine epimer of burnettramic acid A and it is likely that small amounts of it form naturally in acidic environments. In Petromyces alliaceus (Aspergillus alliaceus), this protein is Hybrid PKS-NRPS synthetase buaA.